A 221-amino-acid polypeptide reads, in one-letter code: Probable GTP-binding protein EngB (221 aa).

In terms of domain architecture, EngB-type G spans 23 to 211 (PLREVAFAGR…DNLIIKWLFE (189 aa)). The Mg(2+) site is built by Ser-38 and Thr-60.

This sequence belongs to the TRAFAC class TrmE-Era-EngA-EngB-Septin-like GTPase superfamily. EngB GTPase family. It depends on Mg(2+) as a cofactor.

Necessary for normal cell division and for the maintenance of normal septation. The sequence is that of Probable GTP-binding protein EngB from Polynucleobacter asymbioticus (strain DSM 18221 / CIP 109841 / QLW-P1DMWA-1) (Polynucleobacter necessarius subsp. asymbioticus).